The sequence spans 181 residues: Oleosin (181 aa).

Residues 1–28 (TTTTYDRHFTTTQPHYRQDDRSRYDQQT) form a disordered region. The segment at 1-38 (TTTTYDRHFTTTQPHYRQDDRSRYDQQTHSQSTSRTLA) is polar. Over residues 16–26 (YRQDDRSRYDQ) the composition is skewed to basic and acidic residues. The next 3 helical transmembrane spans lie at 38–58 (AIIA…LTFI), 69–89 (PLFV…GLAV), and 90–110 (TGFL…SYLF). A hydrophobic region spans residues 39–110 (IIALLPVGGI…TGLSSLSYLF (72 aa)). The segment at 155–181 (EMGDQGQVGVHAQVGGGKEGRKSGDRT) is disordered. Low complexity predominate over residues 158-167 (DQGQVGVHAQ). Basic and acidic residues predominate over residues 172–181 (KEGRKSGDRT).

This sequence belongs to the oleosin family.

The protein localises to the lipid droplet. It is found in the membrane. May have a structural role to stabilize the lipid body during desiccation of the seed by preventing coalescence of the oil. Probably interacts with both lipid and phospholipid moieties of lipid bodies. May also provide recognition signals for specific lipase anchorage in lipolysis during seedling growth. The sequence is that of Oleosin from Helianthus annuus (Common sunflower).